We begin with the raw amino-acid sequence, 707 residues long: Integrator complex subunit 13 (707 aa).

Over residues 565–625 (PPEEEERKKR…AEAEVIKDSP (61 aa)) the composition is skewed to basic and acidic residues. Residues 565–651 (PPEEEERKKR…TGPAEKSKGP (87 aa)) are disordered. The stretch at 567-622 (EEEERKKRGRKREDKEEKAEKPPKENEHEKKWQESERVKSVLDREKEDLAEAEVIK) forms a coiled coil. The Nuclear localization signal (NLS) signature appears at 573 to 583 (KRGRKREDKEE). Residues 650–695 (GPMSLLSLWSSRINTANSRKHQEFVGRLNSVNNKAELYQHLKEENG) form a cleavage module binding motif (CMBM) region.

The protein belongs to the Integrator subunit 13 family. Component of the Integrator complex, composed of core subunits INTS1, INTS2, INTS3, INTS4, INTS5, INTS6, INTS7, INTS8, INTS9/RC74, INTS10, INTS11/CPSF3L, INTS12, INTS13, INTS14 and INTS15. The core complex associates with protein phosphatase 2A subunits PPP2CA and PPP2R1A, to form the Integrator-PP2A (INTAC) complex. INTS13 is part of the tail subcomplex, composed of INTS10, INTS13, INTS14 and INTS15.

The protein resides in the nucleus. Its subcellular location is the cytoplasm. Component of the integrator complex, a multiprotein complex that terminates RNA polymerase II (Pol II) transcription in the promoter-proximal region of genes. The integrator complex provides a quality checkpoint during transcription elongation by driving premature transcription termination of transcripts that are unfavorably configured for transcriptional elongation: the complex terminates transcription by (1) catalyzing dephosphorylation of the C-terminal domain (CTD) of Pol II subunit POLR2A/RPB1 and SUPT5H/SPT5, (2) degrading the exiting nascent RNA transcript via endonuclease activity and (3) promoting the release of Pol II from bound DNA. The integrator complex is also involved in terminating the synthesis of non-coding Pol II transcripts, such as enhancer RNAs (eRNAs), small nuclear RNAs (snRNAs), telomerase RNAs and long non-coding RNAs (lncRNAs). Within the integrator complex, INTS13 is part of the integrator tail module and acts as a platform for the recruitment of transcription factors at promoters. This is Integrator complex subunit 13 from Xenopus tropicalis (Western clawed frog).